Reading from the N-terminus, the 221-residue chain is Coiled-coil domain-containing protein 70 (221 aa).

Residues 129–168 (NALWEKDRNLLQEDKALWEEEKALWVEERALLEEEKALWE) are a coiled coil.

In Macaca fascicularis (Crab-eating macaque), this protein is Coiled-coil domain-containing protein 70 (CCDC70).